The chain runs to 3142 residues: Huntingtin (3142 aa).

Positions 3–13 (TLEKLMKAFES) are sufficient for interaction with TPR. At lysine 9 the chain carries N6-acetyllysine. The tract at residues 14–85 (LKSFQQQQQQ…PGPAVAEEPL (72 aa)) is disordered. Low complexity predominate over residues 18–37 (QQQQQQQQQQQQQQQQQQQQ). The span at 38–78 (QPPPPPPPPPPPQLPQPPPQAQPLLPQPQPPPPPPPPPPGP) shows a compositional bias: pro residues. N6-acetyllysine occurs at positions 176 and 234. 3 HEAT repeats span residues 204–241 (PYLVNLLPCLTRTSKRPEESVQETLAAAVPKIMASFGN), 246–283 (NEIKVLLKAFIANLKSSSPTIRRTAAGSAVSICQHSRR), and 316–360 (LTLR…VYEL). An N6-acetyllysine modification is found at lysine 343. Phosphoserine is present on residues serine 411, serine 417, serine 419, and serine 432. N6-acetyllysine is present on lysine 442. Residues 447–469 (EEEALEDDSESRSDVSSSALTAS) are disordered. The interaction with ZDHHC17 stretch occupies residues 491-502 (GHDIITEQPRSQ). The disordered stretch occupies residues 517 to 583 (LTSSATDGDE…TPSDSSEIVL (67 aa)). Low complexity predominate over residues 531–545 (SHSSSQVSAVPSDPA). Over residues 550-579 (DGTQASSPISDSSQTTTEGPDSAVTPSDSS) the composition is skewed to polar residues. Glycine 551 carries the N-myristoyl glycine lipid modification. 2 positions are modified to phosphoserine: serine 640 and serine 643. 2 HEAT repeats span residues 802–839 (FSLADCIPLLRKTLKDESSVTCKLACTAVRNCVMSLCS) and 902–940 (KLQERVLNNVVIHLLGDEDPRVRHVAAASLIRLVPKLFY). The tract at residues 1176–1225 (PSLSPIRRKGKEKEPGEQASVPLSPKKGSEASAASRQSDTSGPVTTSKSS) is disordered. Phosphoserine; by CDK5 is present on residues serine 1179 and serine 1199. Positions 1207–1225 (SAASRQSDTSGPVTTSKSS) are enriched in polar residues. Residues serine 1870 and serine 1874 each carry the phosphoserine modification. Residues 2330–2351 (ERRTNTPKAISEEEEEVDPNTQ) form a disordered region. The short motif at 2395–2404 (IIISLARLPL) is the Nuclear export signal element. Positions 2633 to 2662 (EEEWDEEEEEEADAPAPSSPPTSPVNSRKH) are disordered. Over residues 2634 to 2645 (EEWDEEEEEEAD) the composition is skewed to acidic residues.

This sequence belongs to the huntingtin family. In terms of assembly, interacts with PFN1. Interacts through its N-terminus with PRPF40A. Interacts with PQBP1. Interacts with SETD2. Interacts with SH3GLB1. Interacts with SYVN. Interacts with TPR; the interaction is inhibited by forms of Huntingtin with expanded polyglutamine stretch. Interacts with ZDHHC13 (via ANK repeats). Interacts with ZDHHC17 (via ANK repeats). Interacts with F8A1/F8A2/F8A3. Found in a complex with F8A1/F8A2/F8A3, HTT and RAB5A; mediates the recruitment of HTT by RAB5A. Cleaved by caspases downstream of the polyglutamine stretch. The resulting N-terminal fragments are cytotoxic and provokes apoptosis. Post-translationally, forms with expanded polyglutamine expansion are specifically ubiquitinated by SYVN1, which promotes their proteasomal degradation. In terms of processing, phosphorylation at Ser-1179 and Ser-1199 by CDK5 in response to DNA damage in nuclei of neurons protects neurons against polyglutamine expansion as well as DNA damage mediated toxicity. Myristoylated at Gly-551, following proteolytic cleavage at Asp-550. In terms of tissue distribution, expressed in the brain cortex (at protein level). Widely expressed with the highest level of expression in the brain (nerve fibers, varicosities, and nerve endings). In the brain, the regions where it can be mainly found are the cerebellar cortex, the neocortex, the striatum, and the hippocampal formation.

It localises to the cytoplasm. Its subcellular location is the nucleus. It is found in the early endosome. The protein resides in the cytoplasmic vesicle. The protein localises to the autophagosome. Functionally, may play a role in microtubule-mediated transport or vesicle function. In terms of biological role, promotes the formation of autophagic vesicles. The protein is Huntingtin (HTT) of Homo sapiens (Human).